Here is a 147-residue protein sequence, read N- to C-terminus: uncharacterized protein (147 aa).

The Extracellular portion of the chain corresponds to 1–16; sequence MDHRAAFGYFSNACFK. A helical membrane pass occupies residues 17–37; the sequence is VMLFSSLLASFASSVAFISLI. Residues 38–105 are Cytoplasmic-facing; sequence TFSLSSSESP…FEAAFFLLTN (68 aa). Residues 106-126 form a helical membrane-spanning segment; it reads EMIFFILYYFFSCLMFFYVAS. Residues 127–147 are Extracellular-facing; it reads ERNTNPKILQTINTKPLYIKN.

Its subcellular location is the membrane. This is an uncharacterized protein from Saccharomyces cerevisiae (strain ATCC 204508 / S288c) (Baker's yeast).